The primary structure comprises 152 residues: Heavy metal-associated isoprenylated plant protein 20 (152 aa).

Residues Met-27 to Glu-90 enclose the HMA domain. The Cd(2+) site is built by Cys-38 and Cys-41. Residue Cys-149 is modified to Cysteine methyl ester. Cys-149 is lipidated: S-farnesyl cysteine. The propeptide at Thr-150 to Met-152 is removed in mature form.

This sequence belongs to the HIPP family. In terms of assembly, interacts with ZHD11/HB29. In terms of tissue distribution, expressed in roots, shoot apical meristem, leaves and flowers.

The protein localises to the membrane. Functionally, heavy-metal-binding protein. Binds cadmium. May be involved in cadmium transport and play a role in cadmium detoxification. The polypeptide is Heavy metal-associated isoprenylated plant protein 20 (Arabidopsis thaliana (Mouse-ear cress)).